We begin with the raw amino-acid sequence, 708 residues long: MSNLLVELFVEELPPKALQNIGISFADQIYHSLVTQDLIEPPSELDAANPSPWKWFASPRRIAVWIRNVTQKAPDKQLAQKLMPASVGLDADGNATPALLKKLAALGADESAVSQLKREHDGKAEVLLLDRTVRGATLAEGLQKALDEAIAKLPIPKVMTYQLEDGWSNVNFVRPAHGLVALHGNEVVPIRALGLTAGNRTQGHRFEATQSPIVLRNADSYAEQLQQDGAVIPGFKERRDEIARQLEAAAGKLKLRPIEDEALLEEVTALVERPNVLVGQFEQAFLAVPQECLILTMKANQKYFPLLDAQGRLTNKFLIVSNISPADPSAVVGGNERVVRPRLADAKFFFEQDRKKTLESRIPGLSKVVYHNKLGSQGERIARVSEIANLVGTALGDQTLAAQASQAAQLAKADLVTDMVGEFPELQGIMGRYYAQHEGLSDDIAYAIEDHYRPRFSGDALPRNKVGMIVALADKLETLAGLFSIGEKPTGEKDPFALRRHAIGILRILTEGGLSLPLNTLLEQTLSVFQHEFDHDTALQAVEEFIFDRLSGSLRDQGYSVQEVDAVLAMKPQLLGDITKRLEAVRAFASLPEAASLAAANKRVGNILKKSDSAIEAAINPALLQEDAEKTLAQALAQVQPQAQQAFAAGDYTGSLKALAALKAPVDAFFDHVMVNAEDPALKTNRLALLATLHQAMNQVADLSRLAA.

It belongs to the class-II aminoacyl-tRNA synthetase family. As to quaternary structure, tetramer of two alpha and two beta subunits.

The protein localises to the cytoplasm. The catalysed reaction is tRNA(Gly) + glycine + ATP = glycyl-tRNA(Gly) + AMP + diphosphate. The polypeptide is Glycine--tRNA ligase beta subunit (Methylobacillus flagellatus (strain ATCC 51484 / DSM 6875 / VKM B-1610 / KT)).